Reading from the N-terminus, the 461-residue chain is MTAEGGVQYSKIAEIKGPLVIVDDVENAAFDELVEVETKDGERRLGKVLEVGNGKAIVQVFEGTTGLSIAATNAKFVGKVMEMPVSREVLGRVFDGLGRPKDGLPDPIADQFIDINGEPMNPEQREYPKDFIQTGVSVIDGMITLVRGQKLPIFSGSGMSHNLLAAQIARQASVIGTQDDFAVVFAAIGVQYSEAEYFRRSLEESGALKRSVLFLNTADDPAIERIITPRVALTVAEYLAFELGMHVLVILTDMTNYAEALREISAAREEVPGRKGYPGYLYTDLSTIYERAGKLNGKKGSVTQVPILSMPSDDITHPIPDLTGYITEGQIVLGRDLFRQGVYPPVNILMSLSRLMKDGIGEGSTRADHGEISNQVYDAYSRAQEVRALAGIVGKAGLTEIDLKYMDVGDVFENEFLSQATDENRTIEETLGILWKIVSKLPRNEITKIKDKYVDQYYKEE.

The protein belongs to the ATPase alpha/beta chains family. As to quaternary structure, has multiple subunits with at least A(3), B(3), C, D, E, F, H, I and proteolipid K(x).

Its subcellular location is the cell membrane. Component of the A-type ATP synthase that produces ATP from ADP in the presence of a proton gradient across the membrane. The B chain is a regulatory subunit. This chain is A-type ATP synthase subunit B, found in Nitrosopumilus maritimus (strain SCM1).